The sequence spans 660 residues: MSYEPRGDHDKGYGGGGGHDGLPPRNRGRRPVTDYGASVVHYMRHRQPRYRGSYAGEVERPSPSYIVDMLPPYARVTNPADSVPSRHLHSSLNKIKHPINVVRWTPEGRRLLTASSSGEFTLWNGTGFNFETIMQAHDSAIRALVYSHSDDWLVSADHDGIIKYWQPNFNNVESIRGHTDPIRDLAFSPNDTKFVTASDDQTLKVFDFAGGSTDMTLTGHGWDAKSCDWHPSRGLIVSGSKDHLVKLWDPRTGRCLTTLHGHKNTITKTLFERVQGNCLATSARDQTARVFDLRMMRDIALLRGHEKDISTLTWHPVHSNLLSTGGSDGSLFHYLLDEPNTAPDGSVMPIPAVYDTADPSSAPAQPIYPAHKIPYAHDFAIWSLDWHPLGHILASGSNDRITRFWSRARPGEAPESFNDRYHIGEAAAEAQGTWDRRGGRHMRQVEEEQELEDEMDGLVDQKMPIKGQPGVGGGGMMPGLSFPSIPGLPLQQVPSSGPGGSGFIPPPPIIPGVGGATGVPPPLPFPIPGMPGLPAGVVPPPLPGLDLKNPPDFSALAEMMKKAGYQPPPPPGSAGAPMPPPGILPPGLIPPPGAAGFPMPPPGFAPPPLIPGAGGPPGGATHPDGGNDQYDSSGRRRAPLPSQEESLRMEQSKGNYTRVR.

Over residues Met-1 to Gly-12 the composition is skewed to basic and acidic residues. The segment at Met-1–Val-32 is disordered. WD repeat units follow at residues Lys-94–Ile-133, Ala-136–Arg-176, Gly-177–Thr-216, Gly-219–Thr-258, Gly-261–Leu-301, Gly-304–Asp-344, and Ala-376–Glu-415. The interval Lys-562–Arg-660 is disordered. Residues Gln-566 to Ile-610 are compositionally biased toward pro residues.

The protein resides in the nucleus. Required for 3'-end cleavage and polyadenylation of pre-mRNAs. Also involved in chromosome segregation where it has a role in chromosome attachment to the mitotic spindle. The chain is Polyadenylation factor subunit 2 (paa-1) from Neurospora crassa (strain ATCC 24698 / 74-OR23-1A / CBS 708.71 / DSM 1257 / FGSC 987).